A 956-amino-acid chain; its full sequence is Dual specificity protein kinase YAK1 homolog (956 aa).

The Protein kinase domain maps to 122-464; the sequence is YIVKDLLGHG…PFQAAKHPFI (343 aa). ATP is bound by residues 128–136 and K151; that span reads LGHGTFGQV. S222 bears the Phosphoserine mark. The Proton acceptor role is filled by D249. 3 disordered regions span residues 620-657, 672-781, and 806-956; these read LGTSPSQFTPNTNNQFLAGSPGHHGPTSPVRNSCHGSP, SAGY…NYSD, and GSTD…GSIA. Residues 622 to 636 show a composition bias toward polar residues; the sequence is TSPSQFTPNTNNQFL. Residues 672–691 are compositionally biased toward low complexity; it reads SAGYSGGSQSQDSSLSQAQG. Composition is skewed to polar residues over residues 697-713, 725-757, and 806-817; these read FYQNEGYSGQFSGSPSR, QTQGGTTLSTGYSTHNNANSSLRSNMYNPSSTA, and GSTDASSYSRRF. Residues 818–830 show a composition bias toward low complexity; it reads NSNASTSSSNPTT. Polar residues-rich tracts occupy residues 838-849, 870-884, and 902-912; these read QAFSQVETGSPP, VSQNSPSRLGQQPPQ, and MNAQLPPSNTN. The segment covering 913–924 has biased composition (low complexity); that stretch reads SGGQQRSPRSSS. Polar residues predominate over residues 937–947; sequence NHVPNVPSTSH.

Belongs to the protein kinase superfamily. Ser/Thr protein kinase family. Post-translationally, autophosphorylated at Ser-222.

It carries out the reaction L-seryl-[protein] + ATP = O-phospho-L-seryl-[protein] + ADP + H(+). The catalysed reaction is L-threonyl-[protein] + ATP = O-phospho-L-threonyl-[protein] + ADP + H(+). It catalyses the reaction L-tyrosyl-[protein] + ATP = O-phospho-L-tyrosyl-[protein] + ADP + H(+). In terms of biological role, dual specificity protein kinase that phosphorylates ANN1, ANN2 and CP29B at serine and threonine residues, and ANN1, ANN2 and ANN4 at tyrosine residues. May regulate the phosphorylation status of annexin proteins. Acts as a positive regulator in abscisic acid (ABA)-mediated regulation of postgermination growth and drought response. May regulate the expression of ABA-responsive genes such as RD22, RD29A, LTI65/RD29B and RAB18. This chain is Dual specificity protein kinase YAK1 homolog, found in Arabidopsis thaliana (Mouse-ear cress).